We begin with the raw amino-acid sequence, 532 residues long: Pentatricopeptide repeat-containing protein At5g66500, mitochondrial (532 aa).

The transit peptide at 1–33 (MFACLRIGRFIRLGNVTVKSTNLVLRCVFIRNF) directs the protein to the mitochondrion. 12 PPR repeats span residues 48–82 (DLSS…SPDL), 83–117 (SSHT…GAET), 118–148 (GTIS…VEEK), 149–183 (DLVS…RVEI), 184–218 (SEFT…GRDL), 223–248 (TAMI…LNVH), 250–280 (DEVM…QRPN), 281–314 (VRVL…GFVS), 315–345 (DSKL…IPSK), 346–380 (SVVS…GSGV), 383–413 (NSVT…MKEK), and 419–453 (GTEH…DNQS). The interval 458 to 532 (IWVAVLSACS…VKTAGHSLFI (75 aa)) is type E motif; degenerate.

This sequence belongs to the PPR family. PCMP-E subfamily.

It is found in the mitochondrion. In Arabidopsis thaliana (Mouse-ear cress), this protein is Pentatricopeptide repeat-containing protein At5g66500, mitochondrial (PCMP-E38).